We begin with the raw amino-acid sequence, 142 residues long: 5-hydroxymethyl-dUMP N-hydrolase (142 aa).

5-hydroxymethyl-dUMP is bound by residues G7, I9, R10, G11, S78, G80, E84, and S108.

Belongs to the 2'-deoxynucleoside 5'-phosphate N-hydrolase 1 family. As to quaternary structure, monomer and homodimer.

Its subcellular location is the cytoplasm. The protein resides in the nucleus. The catalysed reaction is 5-hydroxymethyl-dUMP + H2O = 5-hydroxymethyluracil + 2-deoxy-D-ribose 5-phosphate. Its function is as follows. Part of a nucleotide salvage pathway that eliminates epigenetically modified 5-hydroxymethyl-dCMP (hmdCMP) in a two-step process entailing deamination to cytotoxic 5-hydroxymethyl-dUMP (hmdUMP), followed by its hydrolysis into 5-hydroxymethyluracil (hmU) and 2-deoxy-D-ribose 5-phosphate (deoxyribosephosphate). Catalyzes the second step in that pathway, the hydrolysis of the N-glycosidic bond in hmdUMP, degrading this cytotoxic nucleotide to avoid its genomic integration. The polypeptide is 5-hydroxymethyl-dUMP N-hydrolase (dnph1) (Tetraodon nigroviridis (Spotted green pufferfish)).